The primary structure comprises 600 residues: Chaperone protein DnaK (600 aa).

Threonine 175 carries the phosphothreonine; by autocatalysis modification. Residues 572–600 are disordered; that stretch reads FAQQTQQQDPNNQKDDVTEATVTDDSTKK. Residues 591-600 are compositionally biased toward polar residues; that stretch reads ATVTDDSTKK.

The protein belongs to the heat shock protein 70 family.

Acts as a chaperone. The chain is Chaperone protein DnaK from Ureaplasma urealyticum serovar 10 (strain ATCC 33699 / Western).